A 463-amino-acid chain; its full sequence is Argininosuccinate lyase (463 aa).

The protein belongs to the lyase 1 family. Argininosuccinate lyase subfamily.

The protein localises to the cytoplasm. The enzyme catalyses 2-(N(omega)-L-arginino)succinate = fumarate + L-arginine. The protein operates within amino-acid biosynthesis; L-arginine biosynthesis; L-arginine from L-ornithine and carbamoyl phosphate: step 3/3. The polypeptide is Argininosuccinate lyase (Bradyrhizobium sp. (strain ORS 278)).